Reading from the N-terminus, the 370-residue chain is WAT1-related protein At1g44800 (370 aa).

Helical transmembrane passes span 11 to 31 (PILAIISLQFGYAGMYIITMV), 41 to 61 (VLATYRHVVATVVMAPFALMF), 67 to 87 (PKMTLAIFWRLLALGILEPLM), 102 to 122 (SYTSAFTNALPAVTFILALIF), 142 to 162 (VITVGGAMIMTLYKGPAIEIV), 182 to 202 (WVLGTIAIMGSISTWAAFFIL), 216 to 236 (LVTLICGIGTILNAIASLIMV), 252 to 272 (AAVYSGVVCSGIAYYIQSIVI), 278 to 298 (VFTTSFSPMCMIITAFLGALV), and 303 to 323 (IHLGSIIGAVFIVLGLYSVVW). 2 consecutive EamA domains span residues 23–143 (AGMY…GTVI) and 195–322 (TWAA…YSVV).

The protein belongs to the drug/metabolite transporter (DMT) superfamily. Plant drug/metabolite exporter (P-DME) (TC 2.A.7.4) family.

The protein localises to the membrane. The sequence is that of WAT1-related protein At1g44800 from Arabidopsis thaliana (Mouse-ear cress).